The following is a 1191-amino-acid chain: DNA topoisomerase 2 (1191 aa).

ATP contacts are provided by residues asparagine 64, asparagine 95, and 142–149; that span reads GTNGVGLK. Glutamate 437, aspartate 538, and aspartate 540 together coordinate Mg(2+). The region spanning 706–1173 is the Topo IIA-type catalytic domain; that stretch reads IPNFLDGMTR…PGASVWLEEI (468 aa). Catalysis depends on tyrosine 799, which acts as the O-(5'-phospho-DNA)-tyrosine intermediate.

It belongs to the type II topoisomerase family. It depends on Mg(2+) as a cofactor. Requires Mn(2+) as cofactor. Ca(2+) is required as a cofactor.

It localises to the host cytoplasm. It carries out the reaction ATP-dependent breakage, passage and rejoining of double-stranded DNA.. In terms of biological role, type II topoisomerase. Processively relaxes supercoiled DNA. Displays DNA-supercoiling activity only when associated with the viral histone-like protein. In Ornithodoros (relapsing fever ticks), this protein is DNA topoisomerase 2.